A 73-amino-acid chain; its full sequence is Small ribosomal subunit protein bS18 (73 aa).

Belongs to the bacterial ribosomal protein bS18 family. As to quaternary structure, part of the 30S ribosomal subunit. Forms a tight heterodimer with protein bS6.

Functionally, binds as a heterodimer with protein bS6 to the central domain of the 16S rRNA, where it helps stabilize the platform of the 30S subunit. In Prochlorococcus marinus (strain MIT 9313), this protein is Small ribosomal subunit protein bS18.